The following is a 222-amino-acid chain: NADH dehydrogenase [ubiquinone] iron-sulfur protein 8-B, mitochondrial (222 aa).

4Fe-4S ferredoxin-type domains lie at 114 to 143 and 153 to 182; these read RRYP…IEAE and TRYD…EGPN. [4Fe-4S] cluster contacts are provided by cysteine 123, cysteine 126, cysteine 129, cysteine 133, cysteine 162, cysteine 165, cysteine 168, and cysteine 172.

It belongs to the complex I 23 kDa subunit family. In terms of assembly, complex I is composed of at least 49 different subunits. This is a component of the iron-sulfur (IP) fragment of the enzyme. [4Fe-4S] cluster serves as cofactor.

It is found in the mitochondrion. The enzyme catalyses a ubiquinone + NADH + 5 H(+)(in) = a ubiquinol + NAD(+) + 4 H(+)(out). Its function is as follows. Core subunit of the mitochondrial membrane respiratory chain NADH dehydrogenase (Complex I) that is believed to belong to the minimal assembly required for catalysis. Complex I functions in the transfer of electrons from NADH to the respiratory chain. The immediate electron acceptor for the enzyme is believed to be ubiquinone. May donate electrons to ubiquinone. The chain is NADH dehydrogenase [ubiquinone] iron-sulfur protein 8-B, mitochondrial from Arabidopsis thaliana (Mouse-ear cress).